The following is a 190-amino-acid chain: Xanthine phosphoribosyltransferase (190 aa).

Residues Leu20 and Asn27 each coordinate xanthine. A 5-phospho-alpha-D-ribose 1-diphosphate-binding site is contributed by 128–132 (ANGHA). Position 156 (Lys156) interacts with xanthine.

The protein belongs to the purine/pyrimidine phosphoribosyltransferase family. Xpt subfamily. In terms of assembly, homodimer.

The protein localises to the cytoplasm. It carries out the reaction XMP + diphosphate = xanthine + 5-phospho-alpha-D-ribose 1-diphosphate. It participates in purine metabolism; XMP biosynthesis via salvage pathway; XMP from xanthine: step 1/1. In terms of biological role, converts the preformed base xanthine, a product of nucleic acid breakdown, to xanthosine 5'-monophosphate (XMP), so it can be reused for RNA or DNA synthesis. The protein is Xanthine phosphoribosyltransferase of Ectopseudomonas mendocina (strain ymp) (Pseudomonas mendocina).